Consider the following 302-residue polypeptide: Aspartate carbamoyltransferase catalytic subunit (302 aa).

R53 and T54 together coordinate carbamoyl phosphate. L-aspartate is bound at residue K82. Residues R103, H131, and Q134 each contribute to the carbamoyl phosphate site. Residues R164 and R223 each coordinate L-aspartate. Positions 260 and 261 each coordinate carbamoyl phosphate.

The protein belongs to the aspartate/ornithine carbamoyltransferase superfamily. ATCase family. Heterooligomer of catalytic and regulatory chains.

It carries out the reaction carbamoyl phosphate + L-aspartate = N-carbamoyl-L-aspartate + phosphate + H(+). The protein operates within pyrimidine metabolism; UMP biosynthesis via de novo pathway; (S)-dihydroorotate from bicarbonate: step 2/3. Catalyzes the condensation of carbamoyl phosphate and aspartate to form carbamoyl aspartate and inorganic phosphate, the committed step in the de novo pyrimidine nucleotide biosynthesis pathway. This is Aspartate carbamoyltransferase catalytic subunit from Methanococcus vannielii (strain ATCC 35089 / DSM 1224 / JCM 13029 / OCM 148 / SB).